A 485-amino-acid polypeptide reads, in one-letter code: MLKEYNSLIFELSKEGKKAYTLPPLDVEEKPLEDMLPKEMLREKEVDLPEVSEVDVIRHYTLLSQKNYGVDIGFYPLGSCTMKYNPKINEDMASLPGFTELHPYQPEETVQGALKLMYELEKALCEITGMDRFSLHPAAGAHGELTGLMIIKAYHEHRNDKKRKKIIVPDSAHGTNPASAAVAGFDVIEIKSNKEGAIDLEALKAVLNDEVAGLMLTNPSTLGLFEENIVEIARLVHEAGGLLYYDGANLNAIMGISRPGDMGFDVVHLNLHKTFSTPHGGGGPGSGPVGVKKELADFLPVPTVEEKDGRYFLDYDRPLSIGKVRSFYGNFNVMIKAYSYILTMGAEGLKRASELAVLNANYLKEKLKGYYKVAVDKTCMHEFVLAGLAEKSGDVRTLDVAKRLIDYGFHPPTIYFPLIVEEALMIEPTETETKETLDAFAETLIKIAKEAKENPELLKEAPHNTPVRRLDEVLAARNPVIRWTK.

Lys-273 bears the N6-(pyridoxal phosphate)lysine mark.

Belongs to the GcvP family. C-terminal subunit subfamily. As to quaternary structure, the glycine cleavage system is composed of four proteins: P, T, L and H. In this organism, the P 'protein' is a heterodimer of two subunits. Requires pyridoxal 5'-phosphate as cofactor.

The catalysed reaction is N(6)-[(R)-lipoyl]-L-lysyl-[glycine-cleavage complex H protein] + glycine + H(+) = N(6)-[(R)-S(8)-aminomethyldihydrolipoyl]-L-lysyl-[glycine-cleavage complex H protein] + CO2. Functionally, the glycine cleavage system catalyzes the degradation of glycine. The P protein binds the alpha-amino group of glycine through its pyridoxal phosphate cofactor; CO(2) is released and the remaining methylamine moiety is then transferred to the lipoamide cofactor of the H protein. The polypeptide is Probable glycine dehydrogenase (decarboxylating) subunit 2 (Caldanaerobacter subterraneus subsp. tengcongensis (strain DSM 15242 / JCM 11007 / NBRC 100824 / MB4) (Thermoanaerobacter tengcongensis)).